We begin with the raw amino-acid sequence, 551 residues long: Glucans biosynthesis protein D (551 aa).

The tat-type signal signal peptide spans Met-1–Ala-32.

The protein belongs to the OpgD/OpgG family. Post-translationally, predicted to be exported by the Tat system. The position of the signal peptide cleavage has not been experimentally proven.

It localises to the periplasm. Its pathway is glycan metabolism; osmoregulated periplasmic glucan (OPG) biosynthesis. Probably involved in the control of the structural glucose backbone of osmoregulated periplasmic glucans (OPGs). The chain is Glucans biosynthesis protein D from Shigella dysenteriae serotype 1 (strain Sd197).